The primary structure comprises 197 residues: Phospholipid hydroperoxide glutathione peroxidase GPX4 (197 aa).

Ser-40 is subject to Phosphoserine. The active site involves Sec-73. A non-standard amino acid (selenocysteine) is located at residue Sec-73.

The protein belongs to the glutathione peroxidase family. In terms of assembly, monomer. Has a tendency to form higher mass oligomers. Interacts with FUNDC1; this interaction promotes GPX4 recruitment into mitochondria through TOM/TIM complex where it is degraded by mitophagy. Widely expressed with the highest levels in testis, heart, cerebrum, ileum, stomach, liver, jejunum and epididymis. Expressed primarily in testis and sperm midpiece (at protein level). Expressed in brain (at protein level). Expressed in heart, liver and kidney (at protein level). Expressed in retina, especially in inner segments of photoreceptor cells (at protein level). In terms of tissue distribution, highly expressed during embryogenesis. Down-regulated between 14.5 dpc and 17.5 dpc. As to expression, highly expressed during embryogenesis. In contrast to isoform Mitochondrial and isoform Nuclear, which are down-regulated between 14.5 dpc and 17.5 dpc, remains constant. Mainly expressed in sperm. Weakly expressed during embryogenesis. Down-regulated between 14.5 dpc and 17.5 dpc.

It is found in the mitochondrion. The protein resides in the cytoplasm. It localises to the nucleus. It carries out the reaction a hydroperoxy polyunsaturated fatty acid + 2 glutathione = a hydroxy polyunsaturated fatty acid + glutathione disulfide + H2O. It catalyses the reaction 2 glutathione + H2O2 = glutathione disulfide + 2 H2O. The catalysed reaction is tert-butyl hydroperoxide + 2 glutathione = tert-butanol + glutathione disulfide + H2O. The enzyme catalyses cumene hydroperoxide + 2 glutathione = 2-phenylpropan-2-ol + glutathione disulfide + H2O. It carries out the reaction (9S)-hydroperoxy-(10E,12Z)-octadecadienoate + 2 glutathione = (9S)-hydroxy-(10E,12Z)-octadecadienoate + glutathione disulfide + H2O. It catalyses the reaction (13S)-hydroperoxy-(9Z,11E)-octadecadienoate + 2 glutathione = (13S)-hydroxy-(9Z,11E)-octadecadienoate + glutathione disulfide + H2O. The catalysed reaction is (5S)-hydroperoxy-(6E,8Z,11Z,14Z)-eicosatetraenoate + 2 glutathione = (5S)-hydroxy-(6E,8Z,11Z,14Z)-eicosatetraenoate + glutathione disulfide + H2O. The enzyme catalyses (12R)-hydroperoxy-(5Z,8Z,10E,14Z)-eicosatetraenoate + 2 glutathione = (12R)-hydroxy-(5Z,8Z,10E,14Z)-eicosatetraenoate + glutathione disulfide + H2O. It carries out the reaction (12S)-hydroperoxy-(5Z,8Z,10E,14Z)-eicosatetraenoate + 2 glutathione = (12S)-hydroxy-(5Z,8Z,10E,14Z)-eicosatetraenoate + glutathione disulfide + H2O. It catalyses the reaction (15S)-hydroperoxy-(5Z,8Z,11Z,13E)-eicosatetraenoate + 2 glutathione = (15S)-hydroxy-(5Z,8Z,11Z,13E)-eicosatetraenoate + glutathione disulfide + H2O. The catalysed reaction is (5S)-hydroperoxy-(6E,8Z,11Z,14Z,17Z)-eicosapentaenoate + 2 glutathione = (5S)-hydroxy-(6E,8Z,11Z,14Z,17Z)-eicosapentaenoate + glutathione disulfide + H2O. The enzyme catalyses (12S)-hydroperoxy-(5Z,8Z,10E,14Z,17Z)-eicosapentaenoate + 2 glutathione = (12S)-hydroxy-(5Z,8Z,10E,14Z,17Z)-eicosapentaenoate + glutathione disulfide + H2O. It carries out the reaction (15S)-hydroperoxy-(5Z,8Z,11Z,13E,17Z)-eicosapentaenoate + 2 glutathione = (15S)-hydroxy-(5Z,8Z,11Z,13E,17Z)-eicosapentaenoate + glutathione disulfide + H2O. It catalyses the reaction (15S)-hydroperoxy-(11Z,13E)-eicosadienoate + 2 glutathione = (15S)-hydroxy-(11Z,13E)-eicosadienoate + glutathione disulfide + H2O. The catalysed reaction is (17S)-hydroperoxy-(4Z,7Z,10Z,13Z,15E,19Z)-docosahexaenoate + 2 glutathione = (17S)-hydroxy-(4Z,7Z,10Z,13Z,15E,19Z)-docosahexaenoate + glutathione disulfide + H2O. The enzyme catalyses a hydroperoxy-1,2-diacyl-glycero-3-phosphocholine + 2 glutathione = a hydroxy-1,2-diacyl-glycero-3-phosphocholine + glutathione disulfide + H2O. Functionally, essential antioxidant peroxidase that directly reduces phospholipid hydroperoxide even if they are incorporated in membranes and lipoproteins. Can also reduce fatty acid hydroperoxide, cholesterol hydroperoxide and thymine hydroperoxide. Plays a key role in protecting cells from oxidative damage by preventing membrane lipid peroxidation. Required to prevent cells from ferroptosis, a non-apoptotic cell death resulting from an iron-dependent accumulation of lipid reactive oxygen species. The presence of selenocysteine (Sec) versus Cys at the active site is essential for life: it provides resistance to overoxidation and prevents cells against ferroptosis. The presence of Sec at the active site is also essential for the survival of a specific type of parvalbumin-positive interneurons, thereby preventing against fatal epileptic seizures. May be required to protect cells from the toxicity of ingested lipid hydroperoxides. Required for normal sperm development and male fertility. Essential for maturation and survival of photoreceptor cells. Plays a role in a primary T-cell response to viral and parasitic infection by protecting T-cells from ferroptosis and by supporting T-cell expansion. Plays a role of glutathione peroxidase in platelets in the arachidonic acid metabolism. Reduces hydroperoxy ester lipids formed by a 15-lipoxygenase that may play a role as down-regulator of the cellular 15-lipoxygenase pathway. Can also reduce small soluble hydroperoxides such as H2O2 and tert-butyl hydroperoxide. Specifically able to suppress the production of leukotriene and prostaglandin in response to several stimuli by reducing fatty acid hydroperoxide. Its function is as follows. Specifically required to prevent mitochondrial cell death by mediating reduction of cardiolipin hydroperoxide. Also required for normal sperm development and male fertility. In terms of biological role, required for male fertility by stabilizing the condensed chromatin in sperm nuclei. This chain is Phospholipid hydroperoxide glutathione peroxidase GPX4, found in Mus musculus (Mouse).